The primary structure comprises 1490 residues: Leucine-rich repeat-containing protein 7 (1490 aa).

LRR repeat units lie at residues 23–44 (IISVLDYSHCSLQQVPKEVFNF), 47–68 (TLEELYLDANQIEELPKQLFNC), 70–91 (ALRKLSIPDNDLSSLPTSIASL), 93–114 (NLKELDISKNGVQEFPENIKCC), 116–137 (CLTIIEASVNPISKLPDGFTQL), 139–161 (NLTQLYLNDAFLEFLPANFGRLV), 162–183 (KLRILELRENHLKTLPKSMHKL), 185–206 (QLERLDLGNNEFSELPEVLDQI), 208–229 (NLRELWMDNNALQVLPGSIGKL), 231–253 (MLVYLDMSKNRIETVDMDISGCE), 254–275 (ALEDLLLSSNMLQQLPDSIGLL), 277–298 (KLTTLKVDDNQLTMLPNTIGNL), 300–321 (LLEEFDCSCNELESLPPTIGYL), 323–344 (SLRTLAVDENFLPELPREIGSC), 346–367 (NVTVMSLRSNKLEFLPEEIGQM), 369–391 (RLRVLNLSDNRLKNLPFSFTKLK), and 392–413 (ELAALWLSDNQSKALIPLQTEA). Ser439, Ser441, and Ser443 each carry phosphoserine. Basic and acidic residues predominate over residues 663–676 (KKESTDESEVDKTH). 3 disordered regions span residues 663 to 704 (KKES…NTRM), 785 to 807 (AGENANNNPLLSSKARSVPAHGR), and 822 to 899 (ELEQ…YHDP). The segment covering 677–686 (CLNNSVSSGT) has biased composition (polar residues). Low complexity predominate over residues 687–700 (YSDYSPSQASSASS). Thr831 bears the Phosphothreonine mark. Ser850 carries the post-translational modification Phosphoserine. Residues 859–871 (PSKLETTPTTSPL) show a composition bias toward low complexity. Thr865 carries the phosphothreonine modification. Ser869 is modified (phosphoserine). Positions 872 to 882 (PERKDHMKEPT) are enriched in basic and acidic residues. Residues Ser947, Ser949, and Ser1118 each carry the phosphoserine modification. Basic and acidic residues predominate over residues 1134–1144 (PHELPPGDRYG). Disordered stretches follow at residues 1134–1158 (PHELPPGDRYGRATYRGGLEGQSSI) and 1196–1218 (QRRPLSARSYSTESYGASQTRPV). Omega-N-methylarginine is present on Arg1149. The segment covering 1196–1217 (QRRPLSARSYSTESYGASQTRP) has biased composition (polar residues). Residue Ser1233 is modified to Phosphoserine. 2 disordered regions span residues 1238–1265 (GNYGDKTSDNSDIKTRPTPVKGEESCGK) and 1282–1312 (RLDRTPSQQSNILDNGQEDVSPSGQWNPYPL). Residues 1243–1263 (KTSDNSDIKTRPTPVKGEESC) show a composition bias toward basic and acidic residues. Polar residues predominate over residues 1286–1307 (TPSQQSNILDNGQEDVSPSGQW). Residues Ser1288 and Ser1392 each carry the phosphoserine modification. A PDZ domain is found at 1398-1488 (EQFCVRIEKN…TVDLVIQREL (91 aa)).

This sequence belongs to the LAP (LRR and PDZ) protein family. As to quaternary structure, interacts with CNKSR2 and DLG4. Interacts with CTNND2/Catenin delta-2. Forms a complex with N-cadherin through CTNND2. Interacts with CAMK2A. As to expression, expressed in brain (at protein level).

It localises to the cytoplasm. The protein localises to the postsynaptic density. Functionally, required for normal synaptic spine architecture and function. Necessary for DISC1 and GRM5 localization to postsynaptic density complexes and for both N-methyl D-aspartate receptor-dependent and metabotropic glutamate receptor-dependent long term depression. This is Leucine-rich repeat-containing protein 7 (Lrrc7) from Mus musculus (Mouse).